The following is a 902-amino-acid chain: Potassium/sodium hyperpolarization-activated cyclic nucleotide-gated channel 1 (902 aa).

Residues 1–75 form a disordered region; it reads MEGGGKPNSA…PAGSFEDAEG (75 aa). The Cytoplasmic segment spans residues 1-131; that stretch reads MEGGGKPNSA…WIIHPYSDFR (131 aa). The helical transmembrane segment at 132 to 153 threads the bilayer; that stretch reads FYWDLIMLIMMVGNLVIIPVGI. Residues 154–162 are Extracellular-facing; it reads TFFTEQTTT. The helical transmembrane segment at 163–183 threads the bilayer; the sequence is PWIIFNVASDTVFLLDLIMNF. At 184-204 the chain is on the cytoplasmic side; the sequence is RTGTVNEDSSEIILDPKVIKM. Residues 205–225 traverse the membrane as a helical segment; that stretch reads NYLKSWFVVDFISSIPVDYIF. The Extracellular segment spans residues 226 to 249; sequence LIVEKGMDSEVYKTARALRIVRFT. Residues 250 to 270 traverse the membrane as a helical; Voltage-sensor segment; the sequence is KILSLLRLLRLSRLIRYIHQW. At 271–284 the chain is on the cytoplasmic side; it reads EEIFHMTYDLASAV. Residues 285–307 form a helical membrane-spanning segment; the sequence is VRIFNLIGMMLLLCHWDGCLQFL. Residues 308–333 lie on the Extracellular side of the membrane; the sequence is VPLLQDFPPDCWVSLNEMVNDSWGKQ. A glycan (N-linked (GlcNAc...) asparagine) is linked at Asn-327. Residues 334–355 constitute an intramembrane region (pore-forming); the sequence is YSYALFKAMSHMLCIGYGAQAP. The Selectivity filter motif lies at 347–351; sequence CIGYG. Residues 356–360 are Extracellular-facing; it reads VSMSD. A helical membrane pass occupies residues 361-381; it reads LWITMLSMIVGATCYAMFVGH. Residues 382–902 lie on the Cytoplasmic side of the membrane; it reads ATALIQSLDS…AEKPRFASNL (521 aa). 7 residues coordinate 3',5'-cyclic AMP: Gly-528, Glu-529, Cys-531, Arg-538, Thr-539, Arg-579, and Arg-582. Disordered regions lie at residues 634 to 681, 713 to 824, and 858 to 902; these read TALN…QPSA, ASQL…VGES, and MSSG…ASNL. Low complexity-rich tracts occupy residues 639–680, 720–736, and 744–769; these read TSST…PQPS, QQPQ…QTQP, and QPQQ…QQPQ. Positions 770–793 are enriched in polar residues; the sequence is TPGSSTPKNEVHKSTQALHNTNLT. Residues 867–877 are compositionally biased toward pro residues; sequence RGVPPAPPPPA. The segment covering 889–902 has biased composition (basic and acidic residues); it reads KDPDAEKPRFASNL.

The protein belongs to the potassium channel HCN family. Homotetramer. Heterotetramer with HCN2. The potassium channel is composed of a homo- or heterotetrameric complex of pore-forming subunits. Interacts with KCNE2. Interacts with the SH3 domain of CSK. Highly expressed in cerebral cortex, cerebellum, throughout the hippocampus, in medial habenula, anterior dorsal nucleus in the thalamus, tenia tecta, several nuclei of the general motor system and in optic nerve layer. Detected in a subset of elongated cells in taste buds.

Its subcellular location is the cell membrane. The catalysed reaction is Na(+)(in) = Na(+)(out). It carries out the reaction K(+)(in) = K(+)(out). Its activity is regulated as follows. Activated by cAMP, and at 10-100 times higher concentrations, also by cGMP. cAMP binding promotes tetramerization and formation of an active channel. Compared to other family members, cAMP has less stimulatory effect on HCN1 because part of the molecules already contain bound cAMP and form homotetramers when cAMP levels are low, this inherent tetramerization in HCN1 results in a weaker response to increased cAMP. In terms of biological role, hyperpolarization-activated ion channel that are permeable to sodium and potassium ions. Exhibits weak selectivity for potassium over sodium ions. Contributes to the native pacemaker currents in heart (If) and in neurons (Ih). Participates in cerebellar mechanisms of motor learning. May mediate responses to sour stimuli. The sequence is that of Potassium/sodium hyperpolarization-activated cyclic nucleotide-gated channel 1 (Hcn1) from Rattus norvegicus (Rat).